The following is a 353-amino-acid chain: Photosystem II protein D1 (353 aa).

At Thr2 the chain carries N-acetylthreonine. Thr2 is modified (phosphothreonine). The next 3 membrane-spanning stretches (helical) occupy residues 29–46, 118–133, and 142–156; these read YIGW…TATS, HFLL…EWEL, and WIAV…AATA. His118 contacts chlorophyll a. Residue Tyr126 participates in pheophytin a binding. 2 residues coordinate [CaMn4O5] cluster: Asp170 and Glu189. A helical membrane pass occupies residues 197–218; it reads FHMLGVAGVFGGSLFSAMHGSL. Chlorophyll a is bound at residue His198. Residues His215 and 264 to 265 contribute to the a quinone site; that span reads SF. A Fe cation-binding site is contributed by His215. Position 272 (His272) interacts with Fe cation. The helical transmembrane segment at 274–288 threads the bilayer; the sequence is FLAAWPVIGIWFTAL. His332, Glu333, Asp342, and Ala344 together coordinate [CaMn4O5] cluster. The propeptide occupies 345 to 353; sequence SVEAPSVNG.

This sequence belongs to the reaction center PufL/M/PsbA/D family. In terms of assembly, PSII is composed of 1 copy each of membrane proteins PsbA, PsbB, PsbC, PsbD, PsbE, PsbF, PsbH, PsbI, PsbJ, PsbK, PsbL, PsbM, PsbT, PsbX, PsbY, PsbZ, Psb30/Ycf12, at least 3 peripheral proteins of the oxygen-evolving complex and a large number of cofactors. It forms dimeric complexes. The cofactor is The D1/D2 heterodimer binds P680, chlorophylls that are the primary electron donor of PSII, and subsequent electron acceptors. It shares a non-heme iron and each subunit binds pheophytin, quinone, additional chlorophylls, carotenoids and lipids. D1 provides most of the ligands for the Mn4-Ca-O5 cluster of the oxygen-evolving complex (OEC). There is also a Cl(-1) ion associated with D1 and D2, which is required for oxygen evolution. The PSII complex binds additional chlorophylls, carotenoids and specific lipids.. Post-translationally, tyr-161 forms a radical intermediate that is referred to as redox-active TyrZ, YZ or Y-Z. In terms of processing, C-terminally processed by CTPA; processing is essential to allow assembly of the oxygen-evolving complex and thus photosynthetic growth.

The protein localises to the plastid. It is found in the chloroplast thylakoid membrane. It carries out the reaction 2 a plastoquinone + 4 hnu + 2 H2O = 2 a plastoquinol + O2. Functionally, photosystem II (PSII) is a light-driven water:plastoquinone oxidoreductase that uses light energy to abstract electrons from H(2)O, generating O(2) and a proton gradient subsequently used for ATP formation. It consists of a core antenna complex that captures photons, and an electron transfer chain that converts photonic excitation into a charge separation. The D1/D2 (PsbA/PsbD) reaction center heterodimer binds P680, the primary electron donor of PSII as well as several subsequent electron acceptors. The sequence is that of Photosystem II protein D1 from Chlorokybus atmophyticus (Soil alga).